Consider the following 201-residue polypeptide: Adenylyl-sulfate kinase (201 aa).

35 to 42 (GLSGSGKS) lines the ATP pocket. Catalysis depends on Ser-109, which acts as the Phosphoserine intermediate.

Belongs to the APS kinase family.

It carries out the reaction adenosine 5'-phosphosulfate + ATP = 3'-phosphoadenylyl sulfate + ADP + H(+). It participates in sulfur metabolism; hydrogen sulfide biosynthesis; sulfite from sulfate: step 2/3. Catalyzes the synthesis of activated sulfate. The chain is Adenylyl-sulfate kinase from Salmonella paratyphi C (strain RKS4594).